The following is a 311-amino-acid chain: Syntaxin-111 (311 aa).

Residues 1–284 lie on the Cytoplasmic side of the membrane; that stretch reads MNDLMTKSFM…AREHQRSSRK (284 aa). The t-SNARE coiled-coil homology domain occupies 213–275; sequence VHEIQDRHDA…QGGNKELRKA (63 aa). Residues 285 to 305 form a helical; Anchor for type IV membrane protein membrane-spanning segment; that stretch reads WLCIGIIILLLLVLLVIVPIA. The Vesicular portion of the chain corresponds to 306–311; the sequence is TSFKRS.

This sequence belongs to the syntaxin family. In terms of tissue distribution, expressed in roots and panicles.

The protein localises to the cell membrane. It is found in the cytoplasm. Functionally, vesicle trafficking protein that functions in the secretory pathway. This chain is Syntaxin-111, found in Oryza sativa subsp. japonica (Rice).